Consider the following 381-residue polypeptide: Spermidine/putrescine import ATP-binding protein PotA (381 aa).

One can recognise an ABC transporter domain in the interval 22–252; sequence VELRNVFKFF…PKTSFVADFI (231 aa). An ATP-binding site is contributed by 54–61; it reads GPSGCGKT.

This sequence belongs to the ABC transporter superfamily. Spermidine/putrescine importer (TC 3.A.1.11.1) family. In terms of assembly, the complex is composed of two ATP-binding proteins (PotA), two transmembrane proteins (PotB and PotC) and a solute-binding protein (PotD).

Its subcellular location is the cell inner membrane. It catalyses the reaction ATP + H2O + polyamine-[polyamine-binding protein]Side 1 = ADP + phosphate + polyamineSide 2 + [polyamine-binding protein]Side 1.. In terms of biological role, part of the ABC transporter complex PotABCD involved in spermidine/putrescine import. Responsible for energy coupling to the transport system. The polypeptide is Spermidine/putrescine import ATP-binding protein PotA (Trichormus variabilis (strain ATCC 29413 / PCC 7937) (Anabaena variabilis)).